The sequence spans 100 residues: Small ribosomal subunit protein uS14c (100 aa).

It belongs to the universal ribosomal protein uS14 family. Part of the 30S ribosomal subunit.

Its subcellular location is the plastid. The protein resides in the chloroplast. Functionally, binds 16S rRNA, required for the assembly of 30S particles. In Stigeoclonium helveticum (Green alga), this protein is Small ribosomal subunit protein uS14c.